We begin with the raw amino-acid sequence, 249 residues long: Electron transfer flavoprotein subunit beta (249 aa).

The protein belongs to the ETF beta-subunit/FixA family. In terms of assembly, heterodimer of an alpha and a beta subunit. FAD serves as cofactor. It depends on AMP as a cofactor.

Functionally, the electron transfer flavoprotein serves as a specific electron acceptor for other dehydrogenases. It transfers the electrons to the main respiratory chain via ETF-ubiquinone oxidoreductase (ETF dehydrogenase). This Bradyrhizobium diazoefficiens (strain JCM 10833 / BCRC 13528 / IAM 13628 / NBRC 14792 / USDA 110) protein is Electron transfer flavoprotein subunit beta (etfB).